A 612-amino-acid polypeptide reads, in one-letter code: Zinc metalloproteinase-disintegrin-like 8 (612 aa).

The signal sequence occupies residues 1-20; it reads MIQVLLVTICLAVFPYQGSS. A propeptide spanning residues 21 to 189 is cleaved from the precursor; the sequence is IILGSGNVND…KKASQLNLTP (169 aa). Residues 199 to 395 form the Peptidase M12B domain; it reads KYIELVIVAD…NRPPCILNKP (197 aa). Ca(2+) is bound at residue glutamate 202. The N-linked (GlcNAc...) asparagine glycan is linked to asparagine 218. Aspartate 286 serves as a coordination point for Ca(2+). 3 disulfides stabilise this stretch: cysteine 310/cysteine 390, cysteine 350/cysteine 374, and cysteine 352/cysteine 357. Histidine 335 contributes to the Zn(2+) binding site. Glutamate 336 is a catalytic residue. Histidine 339 and histidine 345 together coordinate Zn(2+). Cysteine 390, asparagine 393, valine 405, asparagine 408, phenylalanine 410, glutamate 412, glutamate 415, and aspartate 418 together coordinate Ca(2+). A Disintegrin domain is found at 403–489; it reads PPVCGNYFVE…DCPTDDFQRN (87 aa). 14 disulfide bridges follow: cysteine 406-cysteine 435, cysteine 417-cysteine 430, cysteine 419-cysteine 425, cysteine 429-cysteine 452, cysteine 443-cysteine 449, cysteine 448-cysteine 474, cysteine 461-cysteine 481, cysteine 468-cysteine 500, cysteine 493-cysteine 505, cysteine 512-cysteine 562, cysteine 527-cysteine 573, cysteine 540-cysteine 550, cysteine 557-cysteine 599, and cysteine 593-cysteine 605. The D/ECD-tripeptide motif lies at 467 to 469; sequence ECD. N-linked (GlcNAc...) asparagine glycosylation occurs at asparagine 502.

It belongs to the venom metalloproteinase (M12B) family. P-III subfamily. It depends on Zn(2+) as a cofactor. Expressed by the venom gland.

It is found in the secreted. Snake venom metalloproteinase that impairs hemostasis in the envenomed animal. The chain is Zinc metalloproteinase-disintegrin-like 8 from Crotalus adamanteus (Eastern diamondback rattlesnake).